The chain runs to 298 residues: Fe(II)/2-oxoglutarate-dependent dioxygenase nvfF (298 aa).

His137, Asp139, and His212 together coordinate Fe cation.

It belongs to the PhyH family. In terms of assembly, homodimer. The cofactor is Fe cation.

It carries out the reaction fumigatonoid C + 2-oxoglutarate + O2 = novofumigatonin + succinate + CO2 + H2O. It participates in secondary metabolite biosynthesis; terpenoid biosynthesis. Its function is as follows. Fe(II)/2-oxoglutarate-dependent dioxygenase; part of the gene cluster that mediates the biosynthesis of novofumigatonin, a heavily oxygenated meroterpenoid containing a unique orthoester moiety. The first step of the pathway is the synthesis of 3,5-dimethylorsellinic acid (DMOA) by the polyketide synthase nvfA via condensation of one acetyl-CoA starter unit with 3 malonyl-CoA units and 2 methylations. DMOA is then converted to farnesyl-DMOA by the farnesyltransferase nvfB. Epoxydation by FAD-dependent monooxygenase nvfK, followed by a protonation-initiated cyclization catalyzed by the terpene cyclase nvfL leads to the production of asnavolin H. The short chain dehydrogenase nvfC then as a 3-OH dehydrogenase of asnovolin H to yield chemesin D. There are two branches to synthesize asnovolin A from chemesin D. In one branch, chemesin D undergoes Baeyer-Villiger oxidation by nvfH, methylation by nvfJ, and enoyl reduction by the nvfM D enoylreductase that reduces the double bond between C-5'and C-6', to form respectively asnovolin I, asnovolin K, and asnovolin A. In the other branch, the methylation precedes the Baeyer-Villiger oxidation and the enoyl reduction to yield asnovolin A via the asnovolin J intermediate. Asnovolin A is further converted to fumigatonoid A by the Fe(II)/2-oxoglutarate-dependent dioxygenase nvfI that catalyzes an endoperoxidation reaction. The alpha/beta hydrolase nvfD then acts as an epimerase that converts fumigatonoid A to its C-5' epimer, which then undergoes spontaneous or nvfD-catalyzed lactonization. The following step utilizes the ketoreductase nvfG to produce fumigatonoid B. The dioxygenase nvfE further converts fumigatonoid B into fumigatonoid C. Finally the Fe(II)/2-oxoglutarate-dependent dioxygenase nvfF catalyzes two rounds of oxidation to transform fumigatonoid C into the end product, novofumigatonin A. The polypeptide is Fe(II)/2-oxoglutarate-dependent dioxygenase nvfF (Aspergillus novofumigatus (strain IBT 16806)).